Here is a 737-residue protein sequence, read N- to C-terminus: 1,4-alpha-glucan branching enzyme GlgB (737 aa).

Aspartate 419 functions as the Nucleophile in the catalytic mechanism. Residue glutamate 472 is the Proton donor of the active site.

Belongs to the glycosyl hydrolase 13 family. GlgB subfamily. In terms of assembly, monomer.

The enzyme catalyses Transfers a segment of a (1-&gt;4)-alpha-D-glucan chain to a primary hydroxy group in a similar glucan chain.. The protein operates within glycan biosynthesis; glycogen biosynthesis. Its function is as follows. Catalyzes the formation of the alpha-1,6-glucosidic linkages in glycogen by scission of a 1,4-alpha-linked oligosaccharide from growing alpha-1,4-glucan chains and the subsequent attachment of the oligosaccharide to the alpha-1,6 position. This Mesorhizobium japonicum (strain LMG 29417 / CECT 9101 / MAFF 303099) (Mesorhizobium loti (strain MAFF 303099)) protein is 1,4-alpha-glucan branching enzyme GlgB.